The chain runs to 232 residues: Large ribosomal subunit protein uL1 (232 aa).

This sequence belongs to the universal ribosomal protein uL1 family. In terms of assembly, part of the 50S ribosomal subunit.

Binds directly to 23S rRNA. The L1 stalk is quite mobile in the ribosome, and is involved in E site tRNA release. Its function is as follows. Protein L1 is also a translational repressor protein, it controls the translation of the L11 operon by binding to its mRNA. The polypeptide is Large ribosomal subunit protein uL1 (Porphyromonas gingivalis (strain ATCC 33277 / DSM 20709 / CIP 103683 / JCM 12257 / NCTC 11834 / 2561)).